Reading from the N-terminus, the 89-residue chain is Acylphosphatase (89 aa).

The Acylphosphatase-like domain occupies Arg-3 to Arg-89. Catalysis depends on residues Arg-18 and Asn-36.

It belongs to the acylphosphatase family.

The enzyme catalyses an acyl phosphate + H2O = a carboxylate + phosphate + H(+). The chain is Acylphosphatase (acyP) from Rhodococcus jostii (strain RHA1).